The sequence spans 600 residues: Proline--tRNA ligase (600 aa).

This sequence belongs to the class-II aminoacyl-tRNA synthetase family. ProS type 1 subfamily. As to quaternary structure, homodimer.

The protein localises to the cytoplasm. The enzyme catalyses tRNA(Pro) + L-proline + ATP = L-prolyl-tRNA(Pro) + AMP + diphosphate. Its function is as follows. Catalyzes the attachment of proline to tRNA(Pro) in a two-step reaction: proline is first activated by ATP to form Pro-AMP and then transferred to the acceptor end of tRNA(Pro). As ProRS can inadvertently accommodate and process non-cognate amino acids such as alanine and cysteine, to avoid such errors it has two additional distinct editing activities against alanine. One activity is designated as 'pretransfer' editing and involves the tRNA(Pro)-independent hydrolysis of activated Ala-AMP. The other activity is designated 'posttransfer' editing and involves deacylation of mischarged Ala-tRNA(Pro). The misacylated Cys-tRNA(Pro) is not edited by ProRS. In Gloeothece citriformis (strain PCC 7424) (Cyanothece sp. (strain PCC 7424)), this protein is Proline--tRNA ligase.